The primary structure comprises 236 residues: Phosphoribosylaminoimidazole-succinocarboxamide synthase (236 aa).

It belongs to the SAICAR synthetase family.

The enzyme catalyses 5-amino-1-(5-phospho-D-ribosyl)imidazole-4-carboxylate + L-aspartate + ATP = (2S)-2-[5-amino-1-(5-phospho-beta-D-ribosyl)imidazole-4-carboxamido]succinate + ADP + phosphate + 2 H(+). The protein operates within purine metabolism; IMP biosynthesis via de novo pathway; 5-amino-1-(5-phospho-D-ribosyl)imidazole-4-carboxamide from 5-amino-1-(5-phospho-D-ribosyl)imidazole-4-carboxylate: step 1/2. This is Phosphoribosylaminoimidazole-succinocarboxamide synthase from Chlorobium phaeobacteroides (strain DSM 266 / SMG 266 / 2430).